The primary structure comprises 379 residues: Carbamoyl phosphate synthase small chain (379 aa).

The segment at 1 to 187 is CPSase; it reads MNFTPALLAL…GSGHAPAPAS (187 aa). Residues Ser48, Gly239, and Gly241 each contribute to the L-glutamine site. In terms of domain architecture, Glutamine amidotransferase type-1 spans 191–378; the sequence is KVVAYDFGVK…IELMKPQGVR (188 aa). Catalysis depends on Cys267, which acts as the Nucleophile. L-glutamine contacts are provided by Leu268, Gln271, Asn309, Gly311, and Phe312. Catalysis depends on residues His351 and Glu353.

This sequence belongs to the CarA family. As to quaternary structure, composed of two chains; the small (or glutamine) chain promotes the hydrolysis of glutamine to ammonia, which is used by the large (or ammonia) chain to synthesize carbamoyl phosphate. Tetramer of heterodimers (alpha,beta)4.

The catalysed reaction is hydrogencarbonate + L-glutamine + 2 ATP + H2O = carbamoyl phosphate + L-glutamate + 2 ADP + phosphate + 2 H(+). It catalyses the reaction L-glutamine + H2O = L-glutamate + NH4(+). Its pathway is amino-acid biosynthesis; L-arginine biosynthesis; carbamoyl phosphate from bicarbonate: step 1/1. It participates in pyrimidine metabolism; UMP biosynthesis via de novo pathway; (S)-dihydroorotate from bicarbonate: step 1/3. In terms of biological role, small subunit of the glutamine-dependent carbamoyl phosphate synthetase (CPSase). CPSase catalyzes the formation of carbamoyl phosphate from the ammonia moiety of glutamine, carbonate, and phosphate donated by ATP, constituting the first step of 2 biosynthetic pathways, one leading to arginine and/or urea and the other to pyrimidine nucleotides. The small subunit (glutamine amidotransferase) binds and cleaves glutamine to supply the large subunit with the substrate ammonia. In Thioalkalivibrio sulfidiphilus (strain HL-EbGR7), this protein is Carbamoyl phosphate synthase small chain.